The following is a 380-amino-acid chain: Cytochrome b (380 aa).

4 consecutive transmembrane segments (helical) span residues 34–54 (FGSLLGLCLVSQILTGLFLAM), 78–99 (WLLRNLHANGASFMFICLYMHI), 114–134 (WNIGVMLLVLTMATAFLGYVL), and 179–199 (FFAFHFFLPFMIAGLSVVHLL). Positions 84 and 98 each coordinate heme b. H183 and H197 together coordinate heme b. H202 lines the a ubiquinone pocket. The next 4 helical transmembrane spans lie at 227 to 247 (YKDVVGFVVLLAGLVFIALFS), 289 to 309 (LGGVVALAMSIVVLFFMPFVH), 321 to 341 (LAQVLFWLMVVNVLLLTWLGG), and 348 to 368 (YIFLGQAASVIYFVNILLFIP).

The protein belongs to the cytochrome b family. The cytochrome bc1 complex contains 3 respiratory subunits (MT-CYB, CYC1 and UQCRFS1), 2 core proteins (UQCRC1 and UQCRC2) and probably 6 low-molecular weight proteins. Heme b is required as a cofactor.

The protein resides in the mitochondrion inner membrane. Its function is as follows. Component of the ubiquinol-cytochrome c reductase complex (complex III or cytochrome b-c1 complex) that is part of the mitochondrial respiratory chain. The b-c1 complex mediates electron transfer from ubiquinol to cytochrome c. Contributes to the generation of a proton gradient across the mitochondrial membrane that is then used for ATP synthesis. The sequence is that of Cytochrome b (MT-CYB) from Branchiostoma lanceolatum (Common lancelet).